A 396-amino-acid polypeptide reads, in one-letter code: ATP-dependent RNA helicase eIF4A (396 aa).

The disordered stretch occupies residues 1–20 (MADKGLEDVPEGQIESNYDE). Positions 23-51 (DSFDAMNLKAELLRGVYAYGFERPSAIQQ) match the Q motif motif. Residues 54–224 (IMPVIKGHDV…TKFMRDPVRI (171 aa)) enclose the Helicase ATP-binding domain. 67-74 (AQSGTGKT) contributes to the ATP binding site. Residues 172–175 (DEAD) carry the DEAD box motif. Residues 235 to 396 (GIKQFYIAVE…EMPMNVADLI (162 aa)) form the Helicase C-terminal domain.

This sequence belongs to the DEAD box helicase family. eIF4A subfamily. In terms of assembly, component of the eIF4F complex, which composition varies with external and internal environmental conditions. It is composed of at least eIF4A, eIF4E and eIF4G.

The protein resides in the cytoplasm. The catalysed reaction is ATP + H2O = ADP + phosphate + H(+). Its function is as follows. ATP-dependent RNA helicase which is a subunit of the eIF4F complex involved in cap recognition and is required for mRNA binding to ribosome. In the current model of translation initiation, eIF4A unwinds RNA secondary structures in the 5'-UTR of mRNAs which is necessary to allow efficient binding of the small ribosomal subunit, and subsequent scanning for the initiator codon. This chain is ATP-dependent RNA helicase eIF4A (TIF1), found in Phaeosphaeria nodorum (strain SN15 / ATCC MYA-4574 / FGSC 10173) (Glume blotch fungus).